Consider the following 344-residue polypeptide: Methionine import ATP-binding protein MetN (344 aa).

Positions Ile2–Ile241 constitute an ABC transporter domain. Gly38–Ser45 provides a ligand contact to ATP.

This sequence belongs to the ABC transporter superfamily. Methionine importer (TC 3.A.1.24) family. In terms of assembly, the complex is composed of two ATP-binding proteins (MetN), two transmembrane proteins (MetI) and a solute-binding protein (MetQ).

It localises to the cell inner membrane. The catalysed reaction is L-methionine(out) + ATP + H2O = L-methionine(in) + ADP + phosphate + H(+). It carries out the reaction D-methionine(out) + ATP + H2O = D-methionine(in) + ADP + phosphate + H(+). Functionally, part of the ABC transporter complex MetNIQ involved in methionine import. Responsible for energy coupling to the transport system. The protein is Methionine import ATP-binding protein MetN of Haemophilus ducreyi (strain 35000HP / ATCC 700724).